We begin with the raw amino-acid sequence, 4870 residues long: MSRRSLINAAEQLLHPGPVGAGQVSGESANTIITFEKDIESLFVTQAEAANVGTAMAQALAEVGADDHNRLIKNLNLMSPTHLESIWQFNANVPGMWEECFHDVIERRAANRPHSLAVDAWDMKLTYADLVREARLLAAYLQHRGVRPGSVVPISFERSGAALVAMLAVSKAGGAFVSVPPTLPAGRLDAILEVIEAPFVVTWSKYEPFWAERLPTLPIDSYPKPSADATVKTLGKPEDLFYVIFTSGSTGRPKGCMLSHSNWLNGALRNAPSWKYGPESRVLQMLSHTFDMSLLEICTSLGSGACVCVPRTEEIETSVSDAINRWQVNHVIMTPSLARSLRRDDVPGLKTMCLGGEAFPREIVTMWSERINLWQFYGPSECSINSSSRPITRPDADPLNIGPPNSAACWVVDTQDYNKLVPVGAIGELLVSGPIVGMGYLKNPIKTAEAFLDEVGFVAKDDPQFGGFRFYRTGDLVRWNSDGTITFCGRADTQVKLNGQRLELAEVEYQLGLEAGVQYAIAMAPQSGRCKNNLIAVLTVKCGGASNQGNADDEIPLLDRHDPIVQQTVKKLRSQLQHALPRYMVPTIWAFVGRMPMSPSGKIDRVQLRNWVQEMSQETFDAITGRSFEAEDHVLGLSQLEQEIQLAWAEALGLSAAEVGLQQPFVALGGDSIKALDAVARCRARQIKISMVHILSCEGVREASSLAEVQETPAHQVAEIAVDYSDLWTRLSTEYDISKLGVTQVEEVEDVFPCTTMQEGMFLGQIRRPGAYHMRFFHRVQLKGGSLPTVERIQQAWASLVERHPSLRTVFVDDLSSEAIYHSVVLRSVPMELTMREVPRDLNPESALAMFTEELVPFRPNAPLHRMLLLTCRGRVPYLMLEISHVIMDGYALSVFRREFIRACSSTASLPRGPDYRMFANYHRTRQTDESAKYWTNYLADCVPCHIPTDPLSVPTDASPEWPRTLQRRDFGFDNSVAFLQRCKERQVTLACAIRAAWALVLRAYTQSRDVCFGYVSSGRNVPVPEVETIFGLCLSMQGLFNTAISMEWVPPTAEDEDALLDLEEIREQDDPTEYDIAISVDIHEGHIKLGFLYWPNLSDFQITHLAEALQGAMNCFAFQPDVALNTLTLLQASDLCSTLTNGPTLLPLEAVRGNVISMIDRWVTRQPESPAIDGWDGSLTYKQLHEQSSWVARNLLHQGVKLGDRILVCADRSSRTVVTILGVVRAGCVLVLSNPTDPEKRLQWLAHKCNATLVVVDPAYEERFATSGARVFSTTSVCAPAAWDYEFSALDDQDLVSILFTSGSTGTPKGILMDHGALATSVLLGHGRTLRFSRHTRMLHFASLTFDAALAEIFTTLAHGGCICVPCEEDRLSDVSGCISRFAVNTAMLTPSVGRLLDPEALPTLKALAMIGEPMSRLDVERFAPVLDLYNGAGPTETSIMVTIAGPMKPTDEPVNLGYAVAGVRLWVTEAENPNRLAPLGAVGELIVEGRLVTRGYLDDPARTRESFLPNLPWLPSQHALYRTGDLVRYAEDGSLRYMGRKDTQVKLRGQRIELQEVEYHLRKSLQQAQVVVEMVIPEGKIRAQASLVAFVSGLTAADVESSSARNFDQSMPMSQIALPGSTIQALEEALPRYMIPSVYFALDTIPLSVNGKADRRRLREIGAALLVSSTAHKNTVDGKSEPVKWTASSKLELTLLELWTTTLGLEAETIYGDDSFFELGGDSVSAMKLVATARDRFKLSLSVPQMFRHPTIHQLAAILGEATGQPESSASSTTEEGFTFSTPDDSSTNDGVDDDFLRLATAQLAQLAQEKGKKVDIAALLKQLQGGSSSCKTPSVSSSSSSSSSRKKKSAKVVSPVEAPAPVPVPFSLLDGGADVVEKIRAQAVEQCKILPGDIEDIYPATALQEGMMALMARTPGVYTTTLTCELPERVNLARLHSAWDKAAEAHPILRTRIILTENNTAVQVVQRAKELPWDAYSLQDGDPLPDLTSNMTLGSTLLRLAEIHRQNQPRMLLVAIHHALYDGWSMPLLKQAVEDVYHGQELWPQPFTPFINYLNEGKPAAQGYWTAHLDGFAGSVFPNLPSINHHIQPTERRTRSLAVPTAPPGSQYTMATKIQAAWAVTVSRYAEAEDIVFGTVSTGRSAPVPSIDRMVGPTITTVPVRISLGNQAERLTSLLQRVQEDGWNRMDHEHLGLQHIRRLGESAAAACNLQTLLVIQPREEPRAKSISTLLSGLQDVAELKGVDTYPLMLVCEPDGVSLHLTAVFDPAVLDAVMLDRMLAHWELVLNQIWSEPDMAVMGLDGVSYRDKQTLVRWNAGEKIADGCAHDAVYEWSVRTPHAPAVFAWDGKWTYEELEKCSSLIASQVLVHGVSSGDFVALYHEKSRWAAAAILAVFKAGGILVTLDPAHPKDRIKDILDQARPRLVLTSQSLLDEARELETPVMVVQFAASQPMPGECFPLPTVSPTQAAYAPFTSGSTGRPKGIPLEHRGLAASTASVARACLLRPASRVLHFASFAFDASMMEHLIAWHAGSCLCIPVETVRQTDLARCIRDFEVTWAFLTPSCLRLISPDDVQSLEALGLGGESMTPEDIFIWGPRLRQIVQLYGPAECSIVAALTEVTKPSENRLIGRPNACRCWVVDPHSPDRLAPLGAVGELVIEGITVGRGYIDDPERTTQAFIPPPTWIQTLYPNEQQPSRLYRTGDLVRYAGTDGKLTFIGRRDGQLKLHGQRIELADVEAHLRPLIPGTQKVVVEMVHSVGNHHPLLAAFVEEILTSQDQVEQVVNLLHPSQTQCALNVKAIDSALSQTVPQYMIPSMYLHISRLPLSASGKLNRRHLRRLVAEFPRQRLSEYAAGSGLAVPNRPATAQEREMQAIWARVLSVDPDTIGVNEDFFRIGGDSISGMQVATRCNAAGMHITSADLFQHRTIEQLMRHLSANGKTGSASISLPPEPVDEWVPLAPIQQLFFEIAPQGPDHFNQSLLLRTSRRVSAEKLAGGLDILVGRHSMLRARFCRDDSGQWSQQVRSRGPYPASAFYRLTTHNHIAPELLSSLLAASQMALSIQEGPLLAVDLVNLTDDTQLVYLVAHHLIIDLVSWRILHAELEEYLQTGSFASTTGSVPFLTWSRAQAEYSANHLTPTLPLPGFQEANDGFDASRYWGISCESNTFGQTSTSTFTLDQTVTDQLFGPANNVLDTRPAEILQAALWYSFTQSLTDRPGPSIYVEGHGREPWTGSIDLSGTVGWFTTMSPLVSAPWDSLSQTSMRDFLDALSYIKDQRRRIPANGWAYFTSRYLNDEGKVAYGRMKPVVEILFNYMGQYQEMNREDAILQLAGDGIQSGTGAADVADNVPRFSLIDVSAFISNGCLTFQFILPKSLQQDSRLQGCFQEYERTLVAAANSLSTEGPRKTLADFPLMPALTYDQLSQCLDHTLPSMGLCARDVVDIYPCSPVQQGMLLAQLRDRQAYQQRFRFQVKSRGSTDRLTLEKLKDAWTEVINRHDILRTLLLPVSDYSHLDQVVMAPGSLQHLVRINAMDTNPTQGLPHSINITSDSTGTVICEWNVSHALVDAMSIAVIQQEVNEALEGSLGQHQKTPRYADYIQWLSLQDNTETQAYWKKYLEGVEPCLFPKLASSTDKVNPEGTISAIRATWTRDSRLDKLCHTHGITLTNLFHIVWSLLLSAYLGTDKVCFGYTTLGRDVPVDGVEKMVGPLVNVIATTIQLQEDDSILDALLTHQTHLSNSLQHQHYALADVYASLGLVGSQLFNTIVSLQDISHFDANDERPTRVEMLPANDVSEYDVALNIGVDQSSIQVVCSYRTLSLSVEQADALLRTTSHVLDEILRDPKQPLRDLEVISPQCKEQLVKWNAAMPAPTDEYIHEKIQDQCRLHSSREAACAWDGIFTFAEVDDLSSRLAARLIRMGVTSGHIIPIYSPKSRWTVIAILGVLKTGAAFTLLETSHPTARLRVICNEIKADIIIAPASHAVPAATLAPILVVLDSITSMSPQESDLLPAVGMPPAAEALAYLIFTSGSTGNPKGVMVTHQNLCSNASIMTTSVNMTSDSRVLHFASHAFDACLWEIFGALFAGACLIIPSESETKEDLAGCIERMVVTWAFLTPSVARILKPEALPSLRNLVLGGEPIAASDLDMWRGHVQVVCAYGPTETAILASTTSPSTFPSDGKDIGVPTGSSLWIVDKQNYNKLAPHGATGELLIEGPNVSQGYLGDPEKTNEAFPVAPRWLSQLRKSPTRVYRTGDLVRFNTSTGTIHFVGRKDNQIKFHGQRIELGDIEHHAQQAFSNASMVIVDLITPEQPQQPYIVAFVHQADTRTGTADPIDTILLPPSESFRADAIGAQNHMHKRLPHYMVPTAFLPLHRLPLSGTGKADRKRLRQCALSLSSLELNAYRATASAKRMPFTAAECKMQELVATVLGRDMSEIGMDDSFFYLGGDSIQAMRLVSEGRQQGLTLSLQAIFDAPRLGDLAYRTANLVRVSEPAPPTLPATSSDDCDHKETIVAALPIKKTDVAEVLPTTSFQRTWLDSQLKSYIVVDIPGPIDLARLRTAIQRVVKAHPILRASFVPYETTTMQVILRTAVVITEADLSTTTVEGICRKDANAPMAPGTPYLRVILATQGEVDRKLIMRLSHAQYDGISLSLLMNDLSHAYASESRPLPSSHLPAFNDYITYQQTQGADPTATTFWHRLLKDVPITYLDLQPAETPTSNGSLITRTRDINIAAFPSLPNGITTATAVKAAWSLVLAQKTGSLAVIFGQVVHGRGIALTGVEGIVGPCANITPVVARLGPQTTRMELMQTLQDQHRSAMPYETAGRKELQTIVQHQNNVMADDMELSLGEARWGKTGYVGGEDHVVDVGVE.

Residues Glu-106–Leu-497 form an adenylation 1 region. In terms of domain architecture, Carrier 1 spans Leu-635 to Glu-711. Ser-672 is subject to O-(pantetheine 4'-phosphoryl)serine. Residues Glu-749–Ala-1133 form a condensation 1 region. Residues Asp-1161–Arg-1550 form an adenylation 2 region. A Carrier 2 domain is found at Thr-1688–Thr-1765. Position 1725 is an O-(pantetheine 4'-phosphoryl)serine (Ser-1725). Disordered stretches follow at residues Ala-1764–Val-1794 and Gly-1829–Val-1859. 2 stretches are compositionally biased toward low complexity: residues Glu-1769 to Asp-1792 and Ser-1830 to Ser-1846. The condensation 2 stretch occupies residues Glu-1898 to Leu-2313. The segment at Val-2336–Leu-2728 is adenylation 3. The Carrier 3 domain maps to Arg-2864–Gly-2940. Ser-2901 carries the O-(pantetheine 4'-phosphoryl)serine modification. Condensation stretches follow at residues Trp-2957–Gln-3422 and Asp-3443–Val-3862. Residues His-3887–Phe-4277 are adenylation 4. A Carrier 4 domain is found at Met-4411–Val-4487. Ser-4448 is subject to O-(pantetheine 4'-phosphoryl)serine. A condensation 5 region spans residues Glu-4524–Asn-4837.

Belongs to the NRP synthetase family.

The protein operates within secondary metabolite biosynthesis. Nonribosomal peptide synthetase; part of the gene cluster that mediates the biosynthesis of malformins, cyclic pentapeptides with a disulfide bond between 2 consecutive cysteins, that show potential anti-tumor as well as antimalarial and antitrypanosomal properties. The nonribosomal peptide synthetase mlfA is responsible of the formation of the cyclic pentapeptide. The malformin biosynthesis clusters in malformin-producing fungi also contain enzymes involved in the formation of the disulfide bond between the two consecutive cysteins within malformins, in addition to additional tailoring enzymes such as methyltransferases or oxidoreductases. They are also composed of up to 4 major facilitator superfamily transporters, and transcription factors probably involved in the regulation of the expression of those clusters. This Aspergillus niger (strain ATCC 1015 / CBS 113.46 / FGSC A1144 / LSHB Ac4 / NCTC 3858a / NRRL 328 / USDA 3528.7) protein is Malformin synthetase mlfA.